Reading from the N-terminus, the 539-residue chain is Chaperonin GroEL (539 aa).

ATP-binding positions include 29–32 (TIGP), 86–90 (DGTTT), glycine 413, 476–478 (NAA), and aspartate 492.

Belongs to the chaperonin (HSP60) family. As to quaternary structure, forms a cylinder of 14 subunits composed of two heptameric rings stacked back-to-back. Interacts with the co-chaperonin GroES.

It is found in the cytoplasm. The catalysed reaction is ATP + H2O + a folded polypeptide = ADP + phosphate + an unfolded polypeptide.. Its function is as follows. Together with its co-chaperonin GroES, plays an essential role in assisting protein folding. The GroEL-GroES system forms a nano-cage that allows encapsulation of the non-native substrate proteins and provides a physical environment optimized to promote and accelerate protein folding. The chain is Chaperonin GroEL from Staphylococcus haemolyticus (strain JCSC1435).